The following is a 328-amino-acid chain: Glycerol-3-phosphate dehydrogenase [NAD(P)+] (328 aa).

Trp11, Arg30, and Lys103 together coordinate NADPH. The sn-glycerol 3-phosphate site is built by Lys103, Gly132, and Ser134. NADPH is bound at residue Ala136. 5 residues coordinate sn-glycerol 3-phosphate: Lys187, Asp240, Ser250, Arg251, and Asn252. The active-site Proton acceptor is the Lys187. Arg251 serves as a coordination point for NADPH. Val275 and Glu277 together coordinate NADPH.

The protein belongs to the NAD-dependent glycerol-3-phosphate dehydrogenase family.

Its subcellular location is the cytoplasm. The catalysed reaction is sn-glycerol 3-phosphate + NAD(+) = dihydroxyacetone phosphate + NADH + H(+). It carries out the reaction sn-glycerol 3-phosphate + NADP(+) = dihydroxyacetone phosphate + NADPH + H(+). Its pathway is membrane lipid metabolism; glycerophospholipid metabolism. Functionally, catalyzes the reduction of the glycolytic intermediate dihydroxyacetone phosphate (DHAP) to sn-glycerol 3-phosphate (G3P), the key precursor for phospholipid synthesis. In Aromatoleum aromaticum (strain DSM 19018 / LMG 30748 / EbN1) (Azoarcus sp. (strain EbN1)), this protein is Glycerol-3-phosphate dehydrogenase [NAD(P)+].